The sequence spans 179 residues: CASP-like protein 1F1 (179 aa).

Residues 1-16 are Cytoplasmic-facing; sequence MENVEDKYNSPLKSQK. A helical transmembrane segment spans residues 17-37; the sequence is LFIGAQICLRIVTIGATLAAT. At 38–65 the chain is on the extracellular side; that stretch reads WIMVTDKQSITFGDFVMVAKYNYSSAFK. N59 carries an N-linked (GlcNAc...) asparagine glycan. The chain crosses the membrane as a helical span at residues 66–86; the sequence is FFVLANVIACACSVVSLLFLC. Residues 87–105 lie on the Cytoplasmic side of the membrane; it reads ALGRYSSNPGHVFLLFLHD. The chain crosses the membrane as a helical span at residues 106–126; the sequence is LLMMSLVLAGCSAATAIGFLG. Over 127–150 the chain is Extracellular; it reads KYGNTKSGWMPICDQFGQFCNRGT. Residues 151 to 171 traverse the membrane as a helical segment; the sequence is ISMMLSYLSMVCLLILTVTSA. The Cytoplasmic portion of the chain corresponds to 172–179; the sequence is NKSRQIHV.

Belongs to the Casparian strip membrane proteins (CASP) family. As to quaternary structure, homodimer and heterodimers.

It localises to the cell membrane. This is CASP-like protein 1F1 from Ricinus communis (Castor bean).